Consider the following 633-residue polypeptide: MPPLFLPSSSSALFLLLLLLLTLQTLTSISLSQPQALRSPEKCGNFSVSFPFQLSSSSSAAAFRLSCENSSTLFLHINHQSYRIIEFFTDGLLVDFPSSPSCRQFNDLRSFPFSANQFFSISFENVIGLYDCEDSSLCKFGCETNDLFGCDGREEDETSGGDIGCCYPLSDHSAWRVGDDFSVFSRYGCRGFSSWLVPRGTNRGKRGVKLEWAIPRNSPEAICDREARTVNATAIEGSVRCVCRDGFVGDGFLHGTGCLKSCFKDGKELYGDKCKIKKHNGKKLTVLAGVLAPLFILGSLLALFCLLKRPVTSHKDQQFDISTTTTTTNSVSFRKGYNKTRLFTYRELEEATKGFQDSQKLTQGKTGTIYSGNLTNGTRVIVHKVLCENQIEFMEISSQIDHLSAVLHRNLARIIGFCMDIGYNPLVVYEYPVNGSLGDRLRLGLDWCKRVNIVAEVAGLLALLQYENYPPILHTNISSGNIFLDEDFQAKVTGFGLQRKQRIDTSMYDFAVLLLEIVTGLKQREETVTQALQKIRSGKLEEIVDPSMYFHEQPVAFREQIGLVADIATRCVLFGGDGKFGMVDAARELLQIAGNNGGGGCDKKRDGIEETFSNSSLLQMISMSPDSIYLPKT.

The N-terminal stretch at 1–28 is a signal peptide; sequence MPPLFLPSSSSALFLLLLLLLTLQTLTS. The Extracellular portion of the chain corresponds to 29 to 285; it reads ISLSQPQALR…IKKHNGKKLT (257 aa). N-linked (GlcNAc...) asparagine glycans are attached at residues Asn45, Asn69, and Asn231. The helical transmembrane segment at 286-306 threads the bilayer; the sequence is VLAGVLAPLFILGSLLALFCL. Topologically, residues 307–633 are cytoplasmic; sequence LKRPVTSHKD…SPDSIYLPKT (327 aa). The Protein kinase domain maps to 355–633; it reads FQDSQKLTQG…SPDSIYLPKT (279 aa). Residues 361–369 and Lys384 contribute to the ATP site; that span reads LTQGKTGTI.

The protein belongs to the protein kinase superfamily. Ser/Thr protein kinase family.

It is found in the membrane. In Arabidopsis thaliana (Mouse-ear cress), this protein is Probably inactive receptor-like protein kinase At2g46850.